The chain runs to 624 residues: Chaperone protein HtpG (624 aa).

Positions 1–336 (MKGQETRGFQ…SNDLPLNVSR (336 aa)) are a; substrate-binding. Residues 337–552 (EILQDSTVTR…ADEMSTQMAK (216 aa)) form a b region. Residues 553 to 624 (LFAAAGQSVP…IRRMNQLLVS (72 aa)) form a c region.

Belongs to the heat shock protein 90 family. Homodimer.

Its subcellular location is the cytoplasm. In terms of biological role, molecular chaperone. Has ATPase activity. The sequence is that of Chaperone protein HtpG from Salmonella paratyphi A (strain ATCC 9150 / SARB42).